A 158-amino-acid chain; its full sequence is Acireductone dioxygenase (158 aa).

The Fe(2+) site is built by His-81, His-83, Glu-87, and His-126. The Ni(2+) site is built by His-81, His-83, Glu-87, and His-126.

Belongs to the acireductone dioxygenase (ARD) family. Fe(2+) serves as cofactor. Requires Ni(2+) as cofactor.

It is found in the cytoplasm. The protein resides in the nucleus. It carries out the reaction 1,2-dihydroxy-5-(methylsulfanyl)pent-1-en-3-one + O2 = 4-methylsulfanyl-2-oxobutanoate + formate + 2 H(+). The catalysed reaction is 1,2-dihydroxy-5-(methylsulfanyl)pent-1-en-3-one + O2 = 3-(methylsulfanyl)propanoate + CO + formate + 2 H(+). The protein operates within amino-acid biosynthesis; L-methionine biosynthesis via salvage pathway; L-methionine from S-methyl-5-thio-alpha-D-ribose 1-phosphate: step 5/6. Catalyzes 2 different reactions between oxygen and the acireductone 1,2-dihydroxy-3-keto-5-methylthiopentene (DHK-MTPene) depending upon the metal bound in the active site. Fe-containing acireductone dioxygenase (Fe-ARD) produces formate and 2-keto-4-methylthiobutyrate (KMTB), the alpha-ketoacid precursor of methionine in the methionine recycle pathway. Ni-containing acireductone dioxygenase (Ni-ARD) produces methylthiopropionate, carbon monoxide and formate, and does not lie on the methionine recycle pathway. This is Acireductone dioxygenase from Metarhizium robertsii (strain ARSEF 23 / ATCC MYA-3075) (Metarhizium anisopliae (strain ARSEF 23)).